We begin with the raw amino-acid sequence, 214 residues long: Ribonuclease HII (214 aa).

The RNase H type-2 domain maps to 26 to 214 (EIVCGVDEAG…PVREAFDLIR (189 aa)). Residues Asp-32, Glu-33, and Asp-124 each contribute to the a divalent metal cation site.

The protein belongs to the RNase HII family. The cofactor is Mn(2+). Mg(2+) serves as cofactor.

Its subcellular location is the cytoplasm. It catalyses the reaction Endonucleolytic cleavage to 5'-phosphomonoester.. Functionally, endonuclease that specifically degrades the RNA of RNA-DNA hybrids. The polypeptide is Ribonuclease HII (Burkholderia mallei (strain NCTC 10247)).